The chain runs to 502 residues: Probable malate:quinone oxidoreductase (502 aa).

This sequence belongs to the MQO family. Requires FAD as cofactor.

It catalyses the reaction (S)-malate + a quinone = a quinol + oxaloacetate. The protein operates within carbohydrate metabolism; tricarboxylic acid cycle; oxaloacetate from (S)-malate (quinone route): step 1/1. This Oceanobacillus iheyensis (strain DSM 14371 / CIP 107618 / JCM 11309 / KCTC 3954 / HTE831) protein is Probable malate:quinone oxidoreductase.